The chain runs to 421 residues: 3-isopropylmalate dehydratase large subunit (421 aa).

Residues cysteine 300, cysteine 360, and cysteine 363 each coordinate [4Fe-4S] cluster.

It belongs to the aconitase/IPM isomerase family. LeuC type 2 subfamily. In terms of assembly, heterodimer of LeuC and LeuD. Requires [4Fe-4S] cluster as cofactor.

It catalyses the reaction (2R,3S)-3-isopropylmalate = (2S)-2-isopropylmalate. Its pathway is amino-acid biosynthesis; L-leucine biosynthesis; L-leucine from 3-methyl-2-oxobutanoate: step 2/4. In terms of biological role, catalyzes the isomerization between 2-isopropylmalate and 3-isopropylmalate, via the formation of 2-isopropylmaleate. The polypeptide is 3-isopropylmalate dehydratase large subunit (Lachnoclostridium phytofermentans (strain ATCC 700394 / DSM 18823 / ISDg) (Clostridium phytofermentans)).